A 169-amino-acid polypeptide reads, in one-letter code: uncharacterized protein (169 aa).

Residues 10–30 form a helical membrane-spanning segment; sequence YFVTILIIIIIILIVLLIVFL. A disordered region spans residues 98–123; it reads QSKPINKNNQQTKNTPTPLDDRPDLS. The segment covering 100–115 has biased composition (low complexity); it reads KPINKNNQQTKNTPTP.

It is found in the membrane. This is an uncharacterized protein from Acanthamoeba polyphaga (Amoeba).